The primary structure comprises 932 residues: von Willebrand factor A domain-containing protein DDB_G0292028 (932 aa).

The segment at 1–49 (MNFIKKVIGGGSSKSKTDIKIEDEQHEQQHEQQHEKQQIPDKISTSKVN) is disordered. Over residues 15-39 (SKTDIKIEDEQHEQQHEQQHEKQQI) the composition is skewed to basic and acidic residues. The region spanning 95–222 (LTSPGLNTKV…DVTVNITITS (128 aa)) is the VIT domain. Positions 342–521 (EFIFVLDCSG…IAMQPTLSNI (180 aa)) constitute a VWFA domain. Disordered stretches follow at residues 661–752 (QQIN…SQAQ) and 800–834 (TSQISQSSRECRSKKSSSPTIQKSSSLPSRPSTSS). Residues 677 to 686 (TRVQGSSSVF) show a composition bias toward polar residues. Residues 815-834 (SSSPTIQKSSSLPSRPSTSS) show a composition bias toward low complexity.

The polypeptide is von Willebrand factor A domain-containing protein DDB_G0292028 (Dictyostelium discoideum (Social amoeba)).